Reading from the N-terminus, the 370-residue chain is Putative transposase InsL for insertion sequence element IS186A (370 aa).

This sequence belongs to the transposase 11 family.

In terms of biological role, involved in the transposition of the insertion sequence IS186. This chain is Putative transposase InsL for insertion sequence element IS186A (insL1), found in Escherichia coli (strain K12).